A 249-amino-acid polypeptide reads, in one-letter code: Sugar fermentation stimulation protein homolog (249 aa).

It belongs to the SfsA family.

In Rhizobium rhizogenes (strain K84 / ATCC BAA-868) (Agrobacterium radiobacter), this protein is Sugar fermentation stimulation protein homolog.